Here is a 476-residue protein sequence, read N- to C-terminus: Serine/threonine-protein kinase sax-1 (476 aa).

The Protein kinase domain maps to 87–381 (FESLKVIGRG…LDEIKQCPFV (295 aa)). Residues 93-101 (IGRGAFGEV) and lysine 116 each bind ATP. The active-site Proton acceptor is aspartate 210. The AGC-kinase C-terminal domain occupies 382 to 452 (KRIDWNHIRE…KRFDGLTQKM (71 aa)).

Belongs to the protein kinase superfamily. AGC Ser/Thr protein kinase family. The cofactor is Mg(2+). As to expression, widely expressed in embryonic and larval neurons that contribute axons to the nerve ring and in hypodermal cells, including lateral seam cells. Also displays a punctate localization in muscle.

The protein localises to the cytoplasm. The protein resides in the nucleus. The enzyme catalyses L-seryl-[protein] + ATP = O-phospho-L-seryl-[protein] + ADP + H(+). The catalysed reaction is L-threonyl-[protein] + ATP = O-phospho-L-threonyl-[protein] + ADP + H(+). Its function is as follows. Acts with sax-2 to restrict the growth of both primary and secondary neurites. Regulates mechanosensory tiling by controlling the termination point of sensory dendrites. The polypeptide is Serine/threonine-protein kinase sax-1 (Caenorhabditis elegans).